A 449-amino-acid chain; its full sequence is Glucose-6-phosphate isomerase (449 aa).

Catalysis depends on glutamate 291, which acts as the Proton donor. Residues histidine 312 and lysine 426 contribute to the active site.

This sequence belongs to the GPI family.

It is found in the cytoplasm. The catalysed reaction is alpha-D-glucose 6-phosphate = beta-D-fructose 6-phosphate. It participates in carbohydrate biosynthesis; gluconeogenesis. It functions in the pathway carbohydrate degradation; glycolysis; D-glyceraldehyde 3-phosphate and glycerone phosphate from D-glucose: step 2/4. Functionally, catalyzes the reversible isomerization of glucose-6-phosphate to fructose-6-phosphate. The chain is Glucose-6-phosphate isomerase from Streptococcus pneumoniae (strain ATCC BAA-255 / R6).